A 314-amino-acid polypeptide reads, in one-letter code: N-acyl-aromatic-L-amino acid amidohydrolase (carboxylate-forming) B (314 aa).

Residues His-19 and Glu-22 each coordinate Zn(2+). Substrate contacts are provided by residues Arg-63 and 70 to 71; that span reads NR. His-116 serves as a coordination point for Zn(2+). Substrate contacts are provided by Glu-178 and Tyr-289.

This sequence belongs to the AspA/AstE family. Aspartoacylase subfamily. Homotetramer. It depends on Zn(2+) as a cofactor.

The protein localises to the apical cell membrane. It localises to the cytoplasm. The catalysed reaction is an N-acyl-aromatic L-alpha-amino acid + H2O = an aromatic L-alpha-amino acid + a carboxylate. It carries out the reaction an N-acetyl-L-cysteine-S-conjugate + H2O = an S-substituted L-cysteine + acetate. Functionally, plays an important role in deacetylating mercapturic acids in kidney proximal tubules. In Danio rerio (Zebrafish), this protein is N-acyl-aromatic-L-amino acid amidohydrolase (carboxylate-forming) B (acy3.2).